The primary structure comprises 225 residues: Sodium-dependent neutral amino acid transporter SLC6A17 (225 aa).

3 helical membrane passes run 1-8, 16-35, and 60-80; these read NVWRFPYL, AYLV…LFFL, and GIGF…NVII. Over 81–143 the chain is Extracellular; the sequence is GWSIFYFFKS…NSISESGGLN (63 aa). N-linked (GlcNAc...) asparagine glycosylation occurs at N105. The next 3 membrane-spanning stretches (helical) occupy residues 144-162, 171-188, and 224-225; these read WKMT…MAVV, VMYF…CFLV, and IF.

It belongs to the sodium:neurotransmitter symporter (SNF) (TC 2.A.22) family.

It is found in the cytoplasmic vesicle. The protein localises to the secretory vesicle. It localises to the synaptic vesicle membrane. The protein resides in the postsynapse. Its subcellular location is the presynapse. The enzyme catalyses L-proline(in) + Na(+)(in) = L-proline(out) + Na(+)(out). It catalyses the reaction L-leucine(in) + Na(+)(in) = L-leucine(out) + Na(+)(out). It carries out the reaction glycine(in) + Na(+)(in) = glycine(out) + Na(+)(out). The catalysed reaction is L-alanine(in) + Na(+)(in) = L-alanine(out) + Na(+)(out). The enzyme catalyses L-glutamine(in) + Na(+)(in) = L-glutamine(out) + Na(+)(out). Functionally, synaptic vesicle transporter with apparent selectivity for neutral amino acids. The transport is sodium-coupled but chloride-independent, likely driven by the proton electrochemical gradient generated by vacuolar H(+)-ATPase in an overall electrogenic mechanism. May contribute to the synaptic uptake of neurotransmitter precursors in a process coupled in part to vesicle exocytosis. In Bos taurus (Bovine), this protein is Sodium-dependent neutral amino acid transporter SLC6A17.